The sequence spans 515 residues: Putative ammonium transporter 2 (515 aa).

Transmembrane regions (helical) follow at residues G34–L54, V72–G92, G124–V144, S156–W176, A191–L211, V226–F246, A266–L286, I291–C311, L321–T337, V346–F366, F381–L401, and F404–I424.

It belongs to the ammonia transporter channel (TC 1.A.11.2) family.

Its subcellular location is the membrane. Functionally, involved in the uptake of ammonia. Implicated in aging. The chain is Putative ammonium transporter 2 (amt-2) from Caenorhabditis elegans.